The sequence spans 333 residues: tRNA dimethylallyltransferase (333 aa).

Position 16-23 (16-23 (GPTASGKT)) interacts with ATP. Residue 18 to 23 (TASGKT) participates in substrate binding. Interaction with substrate tRNA stretches follow at residues 41 to 44 (DSAL), 165 to 169 (QRISR), and 253 to 258 (RCVGYR).

This sequence belongs to the IPP transferase family. Monomer. Requires Mg(2+) as cofactor.

The catalysed reaction is adenosine(37) in tRNA + dimethylallyl diphosphate = N(6)-dimethylallyladenosine(37) in tRNA + diphosphate. In terms of biological role, catalyzes the transfer of a dimethylallyl group onto the adenine at position 37 in tRNAs that read codons beginning with uridine, leading to the formation of N6-(dimethylallyl)adenosine (i(6)A). The protein is tRNA dimethylallyltransferase of Polaromonas sp. (strain JS666 / ATCC BAA-500).